An 86-amino-acid chain; its full sequence is Large ribosomal subunit protein uL23 (86 aa).

This sequence belongs to the universal ribosomal protein uL23 family. In terms of assembly, part of the 50S ribosomal subunit. Contacts protein L29.

Binds to 23S rRNA. One of the proteins that surrounds the polypeptide exit tunnel on the outside of the ribosome. The polypeptide is Large ribosomal subunit protein uL23 (Pyrococcus furiosus (strain ATCC 43587 / DSM 3638 / JCM 8422 / Vc1)).